A 22-amino-acid chain; its full sequence is Piscidin-3 (22 aa).

Gly22 is modified (glycine amide).

It belongs to the pleurocidin family. Mast cells in gill, skin and gut, and in lining blood vessels in the viscera.

It is found in the secreted. It localises to the membrane. Its function is as follows. Antimicrobial peptide with broad-spectrum activity against Gram-positive and Gram-negative bacteria. Rapidly inactivates both channel catfish herpesvirus (ED(50)=11 uM) and frog virus 3 (ED(50)=16 uM) over a wide temperature range. Has hemolytic activity. In Morone chrysops x Morone saxatilis (White bass x Striped bass), this protein is Piscidin-3.